Here is a 205-residue protein sequence, read N- to C-terminus: MNIIKQPLRVGVGGPVGSGKTALLEALCKSMRDTWQLAVVTNDIYTREDQRILTEAGALEAERIVGVETGGCPHTAIREDASMNLAAVEALSEKFGNLELIFVESGGDNLSATFSPELADLTIYVIDVAEGEKIPRKGGPGITKSDFLVINKTDLAPYVGASLEVMERDTLRMRGERPWGFTNLKSGEGLQNIIAFIEEQGMLGK.

A GTP-binding site is contributed by 14-21; the sequence is GPVGSGKT.

Belongs to the SIMIBI class G3E GTPase family. UreG subfamily. In terms of assembly, homodimer. UreD, UreF and UreG form a complex that acts as a GTP-hydrolysis-dependent molecular chaperone, activating the urease apoprotein by helping to assemble the nickel containing metallocenter of UreC. The UreE protein probably delivers the nickel.

It localises to the cytoplasm. Facilitates the functional incorporation of the urease nickel metallocenter. This process requires GTP hydrolysis, probably effectuated by UreG. The polypeptide is Urease accessory protein UreG (Escherichia coli O157:H7).